Consider the following 79-residue polypeptide: Sec-independent protein translocase protein TatA (79 aa).

Residues 1-21 form a helical membrane-spanning segment; that stretch reads MGGWSSPSHWLIILLIVVLLF. Basic and acidic residues predominate over residues 49-61; sequence EVAKNTQKIEENK. The tract at residues 49–79 is disordered; it reads EVAKNTQKIEENKNTTNNTNADASIDETKKA.

The protein belongs to the TatA/E family. The Tat system comprises two distinct complexes: a TatABC complex, containing multiple copies of TatA, TatB and TatC subunits, and a separate TatA complex, containing only TatA subunits. Substrates initially bind to the TatABC complex, which probably triggers association of the separate TatA complex to form the active translocon.

Its subcellular location is the cell inner membrane. Part of the twin-arginine translocation (Tat) system that transports large folded proteins containing a characteristic twin-arginine motif in their signal peptide across membranes. TatA could form the protein-conducting channel of the Tat system. The chain is Sec-independent protein translocase protein TatA from Campylobacter jejuni subsp. doylei (strain ATCC BAA-1458 / RM4099 / 269.97).